Reading from the N-terminus, the 378-residue chain is 1-acyl-sn-glycerol-3-phosphate acyltransferase delta (378 aa).

The chain crosses the membrane as a helical span at residues 11–31 (FLCHLIFCYVFIVSGLIINTI). The HXXXXD motif motif lies at 96 to 101 (HKFEID). 3 consecutive transmembrane segments (helical) span residues 125 to 145 (ELAYVPIIGWMWYFTEMVFCT), 307 to 327 (TLVNWLFWASMLLYPFFRFVI), and 338 to 358 (LASFVLVFFVASMGVRWMIGV).

The protein belongs to the 1-acyl-sn-glycerol-3-phosphate acyltransferase family.

The protein localises to the endoplasmic reticulum membrane. The catalysed reaction is a 1-acyl-sn-glycero-3-phosphate + an acyl-CoA = a 1,2-diacyl-sn-glycero-3-phosphate + CoA. It catalyses the reaction (4Z,7Z,10Z,13Z,16Z,19Z)-docosahexaenoyl-CoA + 1-hexadecanoyl-sn-glycero-3-phosphate = 1-hexadecanoyl-2-(4Z,7Z,10Z,13Z,16Z,19Z-docosahexaenoyl)-sn-glycero-3-phosphate + CoA. It carries out the reaction 1-octadecanoyl-sn-glycero-3-phosphate + (9Z,12Z)-octadecadienoyl-CoA = 1-octadecanoyl-2-(9Z,12Z-octadecadienoyl)-sn-glycero-3-phosphate + CoA. The enzyme catalyses 1-octadecanoyl-sn-glycero-3-phosphate + (4Z,7Z,10Z,13Z,16Z,19Z)-docosahexaenoyl-CoA = 1-octadecanoyl-2-(4Z,7Z,10Z,13Z,16Z,19Z-docosahexaenoyl)-sn-glycero-3-phosphate + CoA. The catalysed reaction is (4Z,7Z,10Z,13Z,16Z,19Z)-docosahexaenoyl-CoA + 1-(9Z-octadecenoyl)-sn-glycero-3-phosphate = 1-(9Z-octadecenoyl)-2-(4Z,7Z,10Z,13Z,16Z,19Z-docosahexaenoyl)-sn-glycero-3-phosphate + CoA. It functions in the pathway phospholipid metabolism; CDP-diacylglycerol biosynthesis; CDP-diacylglycerol from sn-glycerol 3-phosphate: step 2/3. In terms of biological role, converts 1-acyl-sn-glycerol-3-phosphate (lysophosphatidic acid or LPA) into 1,2-diacyl-sn-glycerol-3-phosphate (phosphatidic acid or PA) by incorporating an acyl moiety at the sn-2 position of the glycerol backbone. Exhibits high acyl-CoA specificity for polyunsaturated fatty acyl-CoA, especially docosahexaenoyl-CoA (22:6-CoA, DHA-CoA). The polypeptide is 1-acyl-sn-glycerol-3-phosphate acyltransferase delta (AGPAT4) (Bos taurus (Bovine)).